We begin with the raw amino-acid sequence, 627 residues long: Interferon-induced GTP-binding protein MxB (627 aa).

Positions 34 to 307 constitute a Dynamin-type G domain; the sequence is DLALPAIAVI…LVHHIQRSLP (274 aa). The G1 motif stretch occupies residues 44–51; sequence GDQSSGKS. 44–51 is a binding site for GTP; the sequence is GDQSSGKS. Residues 69-71 form a G2 motif region; the sequence is VTR. The segment at 145-148 is G3 motif; sequence DLPG. GTP contacts are provided by residues 145–149 and 214–217; these read DLPGI and TKPD. Residues 214 to 217 form a G4 motif region; sequence TKPD. A G5 motif region spans residues 246 to 249; that stretch reads RCRG. The GED domain maps to 541-627; the sequence is LSEMKLHLES…MKAQNLLATY (87 aa).

This sequence belongs to the TRAFAC class dynamin-like GTPase superfamily. Dynamin/Fzo/YdjA family.

It is found in the cytoplasm. This is Interferon-induced GTP-binding protein MxB (mxb) from Danio rerio (Zebrafish).